A 463-amino-acid chain; its full sequence is Exodeoxyribonuclease 7 large subunit (463 aa).

This sequence belongs to the XseA family. Heterooligomer composed of large and small subunits.

The protein localises to the cytoplasm. It catalyses the reaction Exonucleolytic cleavage in either 5'- to 3'- or 3'- to 5'-direction to yield nucleoside 5'-phosphates.. Bidirectionally degrades single-stranded DNA into large acid-insoluble oligonucleotides, which are then degraded further into small acid-soluble oligonucleotides. This is Exodeoxyribonuclease 7 large subunit from Bordetella pertussis (strain Tohama I / ATCC BAA-589 / NCTC 13251).